The primary structure comprises 492 residues: Fibroblast growth factor receptor substrate 3 (492 aa).

A lipid anchor (N-myristoyl glycine) is attached at Gly-2. Residues 13 to 115 (VPHNHPTKFK…QCNSINVTEE (103 aa)) enclose the IRS-type PTB domain. Disordered regions lie at residues 122–230 (SSHP…SDQR), 328–414 (LPPV…PPRQ), 426–454 (GTAR…SSDS), and 469–492 (LQRA…DLPL). Residues 371-382 (QKPTSTRASARS) show a composition bias toward polar residues.

As to quaternary structure, binds NGFR, GRB2, PTPN11 and ERK2. Binds FGFR1 and NTRK1. Phosphorylated on tyrosine residues upon stimulation by BFGF or NGFB. Phosphorylated by ULK2 in vitro.

The protein resides in the membrane. Its function is as follows. Adapter protein that links FGF and NGF receptors to downstream signaling pathways. Involved in the activation of MAP kinases. Down-regulates ERK2 signaling by interfering with the phosphorylation and nuclear translocation of ERK2. The chain is Fibroblast growth factor receptor substrate 3 (Frs3) from Mus musculus (Mouse).